A 380-amino-acid chain; its full sequence is MRIGIVAGELSGDQLGGTLVEALKQKYPNAIIEGIGGPKMAAAGFKSLYPMDALSLIGFLEIISKGLRILSIRRKIINYFKQNKPDIFIGIDAPDFNLTVEKELRSAGIKTIHYVSPKIWVWREYRIKKIRKATDKILAILPFETEYYKNRHKFEAIYVGHPLAKNIPIHIDRAKYRDKLGLKGSSLPILSVLPGSRTTEVSRLLPLFLLALQKLVDAGYKFKAIMPLAKPSLKPLFAKYKEQIDSLGIEVFETNSHDVLKASDLSLLASGTATLEAMLCKLPMVVGYKLSWLSALIGRMLIGNHSYWAFPNILHKNEIIKELIQEDCTVDNLFSELKRLFDDKRRNDYIVEEFEKIHKEMVIDTESKIIQVLDTMIEKS.

Belongs to the LpxB family.

The catalysed reaction is a lipid X + a UDP-2-N,3-O-bis[(3R)-3-hydroxyacyl]-alpha-D-glucosamine = a lipid A disaccharide + UDP + H(+). The protein operates within bacterial outer membrane biogenesis; LPS lipid A biosynthesis. Its function is as follows. Condensation of UDP-2,3-diacylglucosamine and 2,3-diacylglucosamine-1-phosphate to form lipid A disaccharide, a precursor of lipid A, a phosphorylated glycolipid that anchors the lipopolysaccharide to the outer membrane of the cell. The sequence is that of Lipid-A-disaccharide synthase from Francisella tularensis subsp. tularensis (strain FSC 198).